We begin with the raw amino-acid sequence, 359 residues long: Type-1 angiotensin II receptor B (359 aa).

Residues 1 to 25 are Extracellular-facing; sequence MTLNSSTEDGIKRIQDDCPKAGRHN. The N-linked (GlcNAc...) asparagine glycan is linked to Asn-4. Angiotensin II contacts are provided by Gln-15 and Asp-17. Intrachain disulfides connect Cys-18-Cys-274 and Cys-101-Cys-180. A helical transmembrane segment spans residues 26–55; the sequence is YIFVMIPTLYSIIFVVGIFGNSLVVIVIYF. Residues 56–61 are Cytoplasmic-facing; sequence YMKLKT. Residues 62-89 traverse the membrane as a helical segment; it reads VASVFLLNLALADLCFLLTLPLWAVYTA. At 90 to 98 the chain is on the extracellular side; the sequence is MEYRWPFGN. A helical transmembrane segment spans residues 99-125; that stretch reads HLCKIASASVSFNLYASVFLLTCLSID. The Cytoplasmic portion of the chain corresponds to 126–141; it reads RYLAIVHPMKSRLRRT. Residues 142–165 traverse the membrane as a helical segment; sequence MLVAKVTCIIIWLMAGLASLPAVI. At 166–190 the chain is on the extracellular side; the sequence is YRNVYFIENTNITVCAFHYESQNST. Arg-167 contributes to the angiotensin II binding site. Asn-176 carries N-linked (GlcNAc...) asparagine glycosylation. The angiotensin II site is built by Phe-182, His-183, and Tyr-184. The N-linked (GlcNAc...) asparagine glycan is linked to Asn-188. A helical membrane pass occupies residues 191-216; the sequence is LPIGLGLTKNILGFVFPFLIILTSYT. Position 199 (Lys-199) interacts with angiotensin II. At 217-239 the chain is on the cytoplasmic side; sequence LIWKALKKAYKIQKNTPRNDDIF. A helical membrane pass occupies residues 240-268; sequence RIIMAIVLFFFFSWVPHQIFTFLDVLIQL. Topologically, residues 269 to 278 are extracellular; the sequence is GIIRDCEIAD. The chain crosses the membrane as a helical span at residues 279–304; it reads IVDTAMPITICIAYFNNCLNPLFYGF. Over 305-359 the chain is Cytoplasmic; the sequence is LGKKFKKYFLQLLKYIPPTAKSHAGLSTKMSTLSYRPSDNMSSSAKKSASFFEVE. Residues 339–359 form a disordered region; that stretch reads YRPSDNMSSSAKKSASFFEVE. The segment covering 346–359 has biased composition (low complexity); the sequence is SSSAKKSASFFEVE.

The protein belongs to the G-protein coupled receptor 1 family. Interacts with MAS1. Interacts with ARRB1. Interacts with FLNA (via filamin repeat 21); increases PKA-mediated phosphorylation of FLNA. In terms of processing, C-terminal Ser or Thr residues may be phosphorylated. As to expression, is expressed in the liver, kidney, aorta, lung, uterus, ovary, spleen, heart, and vascular smooth muscle cell. Expressed most abundantly in the adrenal gland.

Its subcellular location is the cell membrane. Receptor for angiotensin II, a vasoconstricting peptide, which acts as a key regulator of blood pressure and sodium retention by the kidney. The activated receptor in turn couples to G-alpha proteins G(q) (GNAQ, GNA11, GNA14 or GNA15) and thus activates phospholipase C and increases the cytosolic Ca(2+) concentrations, which in turn triggers cellular responses such as stimulation of protein kinase C. In Rattus norvegicus (Rat), this protein is Type-1 angiotensin II receptor B (Agtr1b).